The chain runs to 365 residues: MSPRPQIKVGVLGATGTVGQRFIELLAAHPYFALHALGASSRSAGQQYARVVRWKLPSPIPDAVRHMVVHECRPDAPGFAECGVVFSGLDADVAGDIENAFRAADLVVYSNAKNYRRDPLCPLIVPLVNPSHLSIIPYQREQLGLKKGYIVTNANCSTTGIVVPLAALEKAFGPLDTVIVTTLQAISGAGYPGVSSLDIMDNVVPLISGEEDKIEWETNKILGGVTPDNKAFDLHAPKQINVSATCTRVPVIDGHTGCVSVKFARSPPPSVAEVENAFREYTCDAQHLGVPSAPAQAIVVHDAPDRPQPRLDKNLHNGACVSVGRIRECPVFDIKFVCLIDNVRLGAATSSIINAEIAVEKGLIQ.

NADP(+) is bound by residues threonine 15, glycine 16, threonine 17, valine 18, serine 40, serine 43, leucine 89, and aspartate 90. Catalysis depends on cysteine 156, which acts as the Acyl-thioester intermediate. Glycine 188 is a binding site for NADP(+). Histidine 255 serves as the catalytic Proton acceptor. Asparagine 342 is a binding site for NADP(+).

This sequence belongs to the aspartate-semialdehyde dehydrogenase family. In terms of assembly, homotetramer; dimer of dimers.

It is found in the cytoplasm. Its subcellular location is the cytosol. It localises to the nucleus. It catalyses the reaction L-aspartate 4-semialdehyde + phosphate + NADP(+) = 4-phospho-L-aspartate + NADPH + H(+). Its pathway is amino-acid biosynthesis; L-methionine biosynthesis via de novo pathway; L-homoserine from L-aspartate: step 2/3. The protein operates within amino-acid biosynthesis; L-threonine biosynthesis; L-threonine from L-aspartate: step 2/5. With respect to regulation, inhibited by the competitive inhibitor 1,4-benzoquinone and derivates such as 2-chloro-3-methoxy-1,4-naphthoquinone, 2,3-dichloro-1,4-naphthoquinone, 2-chloro-1,4-naphthoquinone, 2-bromo-1,4-naphthoquinone and 2,3-dichloro-5,8-dihydroxy-1,4-naphthoquinone. In terms of biological role, catalyzes the NADPH-dependent formation of L-aspartate 4-semialdehyde (L-ASA) by the reductive dephosphorylation of 4-phospho-L-aspartate. Mediates the second step in the biosynthesis of amino acids that derive from aspartate (the aspartate family of amino acids), including methioinine and threonine, the latter of which is a precursor to isoleucine. The polypeptide is Aspartate-semialdehyde dehydrogenase (Cryptococcus neoformans var. neoformans serotype D (strain JEC21 / ATCC MYA-565) (Filobasidiella neoformans)).